A 40-amino-acid chain; its full sequence is Light-harvesting protein B800/830/1020 beta-1 chain (40 aa).

At 1–20 the chain is on the cytoplasmic side; the sequence is ANDIRPLRDFEDEEAQEFHQ. 2 residues coordinate a bacteriochlorophyll: H19 and H37. Residues 21–40 form a helical membrane-spanning segment; the sequence is AAVQAFFLYVAVAFVAHLPV.

The protein belongs to the antenna complex beta subunit family. In terms of assembly, the core complex is formed by different alpha and beta chains, binding bacteriochlorophyll molecules, and arranged most probably in tetrameric structures disposed around the reaction center. The non-pigmented gamma chains may constitute additional components.

It localises to the cell inner membrane. Antenna complexes are light-harvesting systems, which transfer the excitation energy to the reaction centers. The chain is Light-harvesting protein B800/830/1020 beta-1 chain from Halorhodospira halochloris (Ectothiorhodospira halochloris).